The sequence spans 495 residues: Aspartyl/glutamyl-tRNA(Asn/Gln) amidotransferase subunit B (495 aa).

The protein belongs to the GatB/GatE family. GatB subfamily. As to quaternary structure, heterotrimer of A, B and C subunits.

It carries out the reaction L-glutamyl-tRNA(Gln) + L-glutamine + ATP + H2O = L-glutaminyl-tRNA(Gln) + L-glutamate + ADP + phosphate + H(+). It catalyses the reaction L-aspartyl-tRNA(Asn) + L-glutamine + ATP + H2O = L-asparaginyl-tRNA(Asn) + L-glutamate + ADP + phosphate + 2 H(+). In terms of biological role, allows the formation of correctly charged Asn-tRNA(Asn) or Gln-tRNA(Gln) through the transamidation of misacylated Asp-tRNA(Asn) or Glu-tRNA(Gln) in organisms which lack either or both of asparaginyl-tRNA or glutaminyl-tRNA synthetases. The reaction takes place in the presence of glutamine and ATP through an activated phospho-Asp-tRNA(Asn) or phospho-Glu-tRNA(Gln). The chain is Aspartyl/glutamyl-tRNA(Asn/Gln) amidotransferase subunit B from Methylocella silvestris (strain DSM 15510 / CIP 108128 / LMG 27833 / NCIMB 13906 / BL2).